The sequence spans 318 residues: Chlorophyllase-2 (318 aa).

A GXSXG motif is present at residues 136–140; the sequence is GHSRG. The active-site Nucleophile is Ser-138. Active-site charge relay system residues include Asp-167 and His-244.

This sequence belongs to the AB hydrolase superfamily. Lipase family. Expressed in leaves, flowers and flower buds, but not in roots.

Its subcellular location is the cytoplasm. The protein resides in the cytosol. It catalyses the reaction a chlorophyll + H2O = a chlorophyllide + phytol + H(+). The catalysed reaction is chlorophyll a + H2O = phytol + chlorophyllide a + H(+). It functions in the pathway porphyrin-containing compound metabolism; chlorophyll degradation. Functionally, catalyzes the hydrolysis of ester bond in chlorophyll to yield chlorophyllide and phytol. Does not seem to be required for chlorophyll degradation during senescence. This is Chlorophyllase-2 from Arabidopsis thaliana (Mouse-ear cress).